Reading from the N-terminus, the 692-residue chain is Elongation factor G (692 aa).

The tr-type G domain occupies 8–283 (NRIRNIGIAA…AVIDYLPAPT (276 aa)). Residues 17–24 (AHIDAGKT), 81–85 (DTPGH), and 135–138 (NKMD) each bind GTP.

Belongs to the TRAFAC class translation factor GTPase superfamily. Classic translation factor GTPase family. EF-G/EF-2 subfamily.

The protein resides in the cytoplasm. Functionally, catalyzes the GTP-dependent ribosomal translocation step during translation elongation. During this step, the ribosome changes from the pre-translocational (PRE) to the post-translocational (POST) state as the newly formed A-site-bound peptidyl-tRNA and P-site-bound deacylated tRNA move to the P and E sites, respectively. Catalyzes the coordinated movement of the two tRNA molecules, the mRNA and conformational changes in the ribosome. The chain is Elongation factor G from Helicobacter pylori (strain HPAG1).